A 599-amino-acid chain; its full sequence is Elongation factor 4 (599 aa).

A tr-type G domain is found at 2 to 184; it reads KNIRNFSIIA…RLVRDIPPPE (183 aa). GTP-binding positions include 14 to 19 and 131 to 134; these read DHGKST and NKID.

This sequence belongs to the TRAFAC class translation factor GTPase superfamily. Classic translation factor GTPase family. LepA subfamily.

The protein resides in the cell inner membrane. It catalyses the reaction GTP + H2O = GDP + phosphate + H(+). Required for accurate and efficient protein synthesis under certain stress conditions. May act as a fidelity factor of the translation reaction, by catalyzing a one-codon backward translocation of tRNAs on improperly translocated ribosomes. Back-translocation proceeds from a post-translocation (POST) complex to a pre-translocation (PRE) complex, thus giving elongation factor G a second chance to translocate the tRNAs correctly. Binds to ribosomes in a GTP-dependent manner. In Escherichia coli (strain SE11), this protein is Elongation factor 4.